Reading from the N-terminus, the 501-residue chain is Armadillo repeat-containing protein 6 (501 aa).

The residue at position 64 (Ser-64) is a Phosphoserine. 4 ARM repeats span residues 220-264 (GVLP…HAHN), 274-318 (KGLK…DLGG), 319-369 (LSIL…RAGG), and 370-412 (TESI…VEGG). A Pros-methylhistidine modification is found at His-263.

Belongs to the ARMC6 family. Methylated at His-263 by METTL9.

This Pongo abelii (Sumatran orangutan) protein is Armadillo repeat-containing protein 6 (ARMC6).